The following is a 22-amino-acid chain: Chymotrypsin inhibitor (22 aa).

The segment at 1–22 (FDESFGFQGPSTYEKTPLGEPA) is disordered.

In terms of tissue distribution, hemolymph.

Its subcellular location is the secreted. It localises to the extracellular space. In terms of biological role, inhibits chymotrypsin stoichiometrically. Also inhibits porcine pancreatic elastase and trypsin. This is Chymotrypsin inhibitor from Mythimna unipuncta (Armyworm moth).